The following is a 466-amino-acid chain: Myocardial zonula adherens protein (466 aa).

Residues 1-10 (MLRSTSTVTL) show a composition bias toward polar residues. An N-terminal signal peptide occupies residues 1–16 (MLRSTSTVTLFSGGGA). The interval 1–68 (MLRSTSTVTL…SNGESTKRLP (68 aa)) is disordered. Positions 45–55 (TEKKIERKDQP) are enriched in basic and acidic residues. Coiled coils occupy residues 95–137 (NQLK…QDLS) and 187–415 (HIKD…LTET).

This sequence belongs to the MYZAP family. In terms of assembly, interacts with DSP, MPRIP and TJP1/ZO1. Interaction with MPRIP inhibits the activation of transcription factor SRF. Interacts with GRIN1. Interacts with DYNLL1. As to expression, detected in heart myocardium and lung.

It localises to the cytoplasm. It is found in the cytoskeleton. The protein localises to the cell membrane. The protein resides in the myofibril. Its subcellular location is the sarcomere. It localises to the i band. It is found in the z line. The protein localises to the cell junction. Its function is as follows. Plays a role in cellular signaling via Rho-related GTP-binding proteins and activation of transcription factor SRF. Targets TJP1 to cell junctions. In cortical neurons, may play a role in glutaminergic signal transduction through interaction with the NMDA receptor subunit GRIN1. This Mus musculus (Mouse) protein is Myocardial zonula adherens protein (Myzap).